Here is a 342-residue protein sequence, read N- to C-terminus: L-threonine 3-dehydrogenase (342 aa).

C38 is a Zn(2+) binding site. Active-site charge relay system residues include T40 and H43. H63, E64, C93, C96, C99, and C107 together coordinate Zn(2+). NAD(+) contacts are provided by residues I175, D195, R200, 262-264 (LGI), and 286-287 (IY).

The protein belongs to the zinc-containing alcohol dehydrogenase family. In terms of assembly, homotetramer. Zn(2+) is required as a cofactor.

It localises to the cytoplasm. The catalysed reaction is L-threonine + NAD(+) = (2S)-2-amino-3-oxobutanoate + NADH + H(+). The protein operates within amino-acid degradation; L-threonine degradation via oxydo-reductase pathway; glycine from L-threonine: step 1/2. Functionally, catalyzes the NAD(+)-dependent oxidation of L-threonine to 2-amino-3-ketobutyrate. The protein is L-threonine 3-dehydrogenase of Aeromonas hydrophila subsp. hydrophila (strain ATCC 7966 / DSM 30187 / BCRC 13018 / CCUG 14551 / JCM 1027 / KCTC 2358 / NCIMB 9240 / NCTC 8049).